A 155-amino-acid polypeptide reads, in one-letter code: Large ribosomal subunit protein uL22 (155 aa).

It belongs to the universal ribosomal protein uL22 family. Part of the 50S ribosomal subunit.

This protein binds specifically to 23S rRNA. It makes multiple contacts with different domains of the 23S rRNA in the assembled 50S subunit and ribosome. In terms of biological role, the globular domain of the protein is located near the polypeptide exit tunnel on the outside of the subunit, while an extended beta-hairpin is found that lines the wall of the exit tunnel in the center of the 70S ribosome. This Pyrococcus furiosus (strain ATCC 43587 / DSM 3638 / JCM 8422 / Vc1) protein is Large ribosomal subunit protein uL22.